Reading from the N-terminus, the 834-residue chain is MTEEKKFSGSNRPARKQAVPERKELPASQRRHAAKLADGTTPAQGGSRPSRPARPNNNNQNRPNNGGQSQNRNNQNRSNTSTGGQNRSNNGGNRNNRPGSRVAPAEGRPMIREKKNWSTKPREGQVDYSAKPDNSLKQYVNENEKKRQASAAAKHPKKPAAATKPAVKKETSATKPATASTTTGAGKFGGALASGNNSARNNSRKRNTNGTGQQTPRRNDRPRGSKKSRRIAAKHQPSTPATVRKEQPLPAVLEYRVGMNVQDLSKLLHRDTAEIIKKLFLLGIVTNQNQSLDEDTIEILAADYGIEAQAKEEEDVADIDRFFDDENIDESKLVSRPPVVTIMGHVDHGKTTLLDYLRNSHVTEGEAGGITQHIGAYQTRINDKLITFLDTPGHAAFTEMRARGANVTDLTILVVAADDGVMPQTIEAINHAKAAGTPIIVAVNKIDKPGANPDDVMNQLMAYDLVPEEYGGDTIFVKISAKFGQNVDELLEMILLQAEVLELKANPNMPARGSVIEARLDKGRGPVSTVLVQQGTMHVGDPIVVGNTYGRVRTMTNERGVELSEALPATPIQITGLNGVPQAGDRFIVMADEKTARAAGEERAKRAQEAVRNSGSVVTLDTLFNTMAEKAMKTVPVIVKADVQGSVEALSGSLKKIEVDGVRVDIIHTAVGAINESDVTLAEASGAIIIGFNVRPTPLAKSQSDSEKVDIRFYNVIYNAIDDVEAAMKGQLEPVYEEKVIGKVEVKELFKFSKVGTIAGAMVEEGKITKDSKVRVIRDNVVVFDGEVGSLQRGKDAVNEVKMGFEFGFTVAKFNDVHAGDVVEAYVMEEVKPK.

The tract at residues 1-247 (MTEEKKFSGS…STPATVRKEQ (247 aa)) is disordered. The span at 45 to 101 (GGSRPSRPARPNNNNQNRPNNGGQSQNRNNQNRSNTSTGGQNRSNNGGNRNNRPGSR) shows a compositional bias: low complexity. Basic and acidic residues predominate over residues 109–125 (PMIREKKNWSTKPREGQ). 2 stretches are compositionally biased toward low complexity: residues 149-165 (ASAA…ATKP) and 173-201 (ATKP…SARN). Over residues 224–233 (GSKKSRRIAA) the composition is skewed to basic residues. One can recognise a tr-type G domain in the interval 335–504 (SRPPVVTIMG…LLQAEVLELK (170 aa)). Positions 344–351 (GHVDHGKT) are G1. 344 to 351 (GHVDHGKT) contributes to the GTP binding site. Positions 369–373 (GITQH) are G2. A G3 region spans residues 390–393 (DTPG). GTP contacts are provided by residues 390–394 (DTPGH) and 444–447 (NKID). Residues 444–447 (NKID) form a G4 region. Residues 480–482 (SAK) form a G5 region.

It belongs to the TRAFAC class translation factor GTPase superfamily. Classic translation factor GTPase family. IF-2 subfamily.

Its subcellular location is the cytoplasm. One of the essential components for the initiation of protein synthesis. Protects formylmethionyl-tRNA from spontaneous hydrolysis and promotes its binding to the 30S ribosomal subunits. Also involved in the hydrolysis of GTP during the formation of the 70S ribosomal complex. This chain is Translation initiation factor IF-2, found in Leuconostoc mesenteroides subsp. mesenteroides (strain ATCC 8293 / DSM 20343 / BCRC 11652 / CCM 1803 / JCM 6124 / NCDO 523 / NBRC 100496 / NCIMB 8023 / NCTC 12954 / NRRL B-1118 / 37Y).